A 320-amino-acid chain; its full sequence is Malate dehydrogenase (320 aa).

NAD(+)-binding positions include 10 to 15 and aspartate 34; that span reads GAGNIG. Substrate is bound by residues arginine 83 and arginine 89. Residues asparagine 96 and 119–121 contribute to the NAD(+) site; that span reads ITN. 2 residues coordinate substrate: asparagine 121 and arginine 152. Histidine 176 serves as the catalytic Proton acceptor.

Belongs to the LDH/MDH superfamily. MDH type 3 family.

It catalyses the reaction (S)-malate + NAD(+) = oxaloacetate + NADH + H(+). Its function is as follows. Catalyzes the reversible oxidation of malate to oxaloacetate. This chain is Malate dehydrogenase, found in Sphingopyxis alaskensis (strain DSM 13593 / LMG 18877 / RB2256) (Sphingomonas alaskensis).